The sequence spans 210 residues: MASTNQKVVIIDTGCANVSSVRFAIERLGYTVTISKETSVVLNADKLFLPGVGTASEAMKNLQERDLVELVKQVDKPLLGICLGMQLLGALSEEQGQNGKELVPCLHLCDAPIKKLKTGNLPLPHMGWNTITPIDNHPLFQGIPAGSYFYFVHSYAMPVSTGVNDYTIAQCEYGQPFSAAIQSGNYYGVQFHPERSSKAGSQLIKNFLEM.

In terms of domain architecture, Glutamine amidotransferase type-1 spans 7 to 210 (KVVIIDTGCA…SQLIKNFLEM (204 aa)). The active-site Nucleophile is Cys82. Active-site residues include His192 and Glu194.

As to quaternary structure, heterodimer of HisH and HisF.

It is found in the cytoplasm. It carries out the reaction 5-[(5-phospho-1-deoxy-D-ribulos-1-ylimino)methylamino]-1-(5-phospho-beta-D-ribosyl)imidazole-4-carboxamide + L-glutamine = D-erythro-1-(imidazol-4-yl)glycerol 3-phosphate + 5-amino-1-(5-phospho-beta-D-ribosyl)imidazole-4-carboxamide + L-glutamate + H(+). The enzyme catalyses L-glutamine + H2O = L-glutamate + NH4(+). Its pathway is amino-acid biosynthesis; L-histidine biosynthesis; L-histidine from 5-phospho-alpha-D-ribose 1-diphosphate: step 5/9. In terms of biological role, IGPS catalyzes the conversion of PRFAR and glutamine to IGP, AICAR and glutamate. The HisH subunit catalyzes the hydrolysis of glutamine to glutamate and ammonia as part of the synthesis of IGP and AICAR. The resulting ammonia molecule is channeled to the active site of HisF. In Photobacterium profundum (strain SS9), this protein is Imidazole glycerol phosphate synthase subunit HisH.